Here is a 460-residue protein sequence, read N- to C-terminus: UDP-N-acetylmuramoylalanine--D-glutamate ligase (460 aa).

115–121 (GTDGKTT) provides a ligand contact to ATP.

Belongs to the MurCDEF family.

It is found in the cytoplasm. It catalyses the reaction UDP-N-acetyl-alpha-D-muramoyl-L-alanine + D-glutamate + ATP = UDP-N-acetyl-alpha-D-muramoyl-L-alanyl-D-glutamate + ADP + phosphate + H(+). Its pathway is cell wall biogenesis; peptidoglycan biosynthesis. In terms of biological role, cell wall formation. Catalyzes the addition of glutamate to the nucleotide precursor UDP-N-acetylmuramoyl-L-alanine (UMA). In Chlorobium luteolum (strain DSM 273 / BCRC 81028 / 2530) (Pelodictyon luteolum), this protein is UDP-N-acetylmuramoylalanine--D-glutamate ligase.